A 303-amino-acid polypeptide reads, in one-letter code: D-alanine--D-alanine ligase (303 aa).

The ATP-grasp domain maps to 103-293 (KTLFIKGGIP…FAQLCEKILE (191 aa)). An ATP-binding site is contributed by 130-179 (PYVIKPSRQGSSIGIEFVYDIKELDQAIKKSTQYDHVVLAEALITGKELT). Positions 247, 260, and 262 each coordinate Mg(2+).

Belongs to the D-alanine--D-alanine ligase family. Mg(2+) is required as a cofactor. Requires Mn(2+) as cofactor.

It localises to the cytoplasm. It catalyses the reaction 2 D-alanine + ATP = D-alanyl-D-alanine + ADP + phosphate + H(+). It functions in the pathway cell wall biogenesis; peptidoglycan biosynthesis. In terms of biological role, cell wall formation. The sequence is that of D-alanine--D-alanine ligase from Methylacidiphilum infernorum (isolate V4) (Methylokorus infernorum (strain V4)).